The following is a 212-amino-acid chain: Probable nicotinate-nucleotide adenylyltransferase (212 aa).

Belongs to the NadD family.

The enzyme catalyses nicotinate beta-D-ribonucleotide + ATP + H(+) = deamido-NAD(+) + diphosphate. The protein operates within cofactor biosynthesis; NAD(+) biosynthesis; deamido-NAD(+) from nicotinate D-ribonucleotide: step 1/1. In terms of biological role, catalyzes the reversible adenylation of nicotinate mononucleotide (NaMN) to nicotinic acid adenine dinucleotide (NaAD). This is Probable nicotinate-nucleotide adenylyltransferase from Saccharopolyspora erythraea (strain ATCC 11635 / DSM 40517 / JCM 4748 / NBRC 13426 / NCIMB 8594 / NRRL 2338).